Reading from the N-terminus, the 347-residue chain is Protein-arginine kinase (347 aa).

In terms of domain architecture, Phosphagen kinase C-terminal spans 22–247 (LVVSTRIRLA…EQVIQAERHA (226 aa)). Residues 25-29 (STRIR), His-85, Arg-118, 169-173 (RASVM), and 200-205 (RGRYGE) each bind ATP. The RDXXRA motif of the pArg binding pocket involved in allosteric regulation motif lies at 330 to 335 (RDRERA).

The protein belongs to the ATP:guanido phosphotransferase family.

It catalyses the reaction L-arginyl-[protein] + ATP = N(omega)-phospho-L-arginyl-[protein] + ADP + H(+). Appears to be allosterically activated by the binding of pArg-containing polypeptides to the pArg-binding pocket localized in the C-terminal domain of McsB. Its function is as follows. Catalyzes the specific phosphorylation of arginine residues in proteins. The protein is Protein-arginine kinase of Exiguobacterium sp. (strain ATCC BAA-1283 / AT1b).